A 507-amino-acid chain; its full sequence is ATP synthase subunit alpha, chloroplastic (507 aa).

170–177 (GDRQTGKT) provides a ligand contact to ATP.

Belongs to the ATPase alpha/beta chains family. As to quaternary structure, F-type ATPases have 2 components, CF(1) - the catalytic core - and CF(0) - the membrane proton channel. CF(1) has five subunits: alpha(3), beta(3), gamma(1), delta(1), epsilon(1). CF(0) has four main subunits: a, b, b' and c.

The protein localises to the plastid. Its subcellular location is the chloroplast thylakoid membrane. It catalyses the reaction ATP + H2O + 4 H(+)(in) = ADP + phosphate + 5 H(+)(out). In terms of biological role, produces ATP from ADP in the presence of a proton gradient across the membrane. The alpha chain is a regulatory subunit. The chain is ATP synthase subunit alpha, chloroplastic from Ipomoea purpurea (Common morning glory).